The following is a 134-amino-acid chain: PEDKEQAQQIQHEDLLSLVLKVLRSWNDPLLHMVSEVQDIQEAPDTILWKAVEIEEQTKRLLEGMERIVGRIHPGDLENEIYSPWPGPSAAIPGDESSRLFAFYNLLHCLRRDSHKIDNYLKLLKCRLIHDGNC.

C126 and C134 are oxidised to a cystine.

Belongs to the somatotropin/prolactin family.

Its subcellular location is the secreted. This chain is Prolactin, found in Bufo japonicus (Japanese common toad).